We begin with the raw amino-acid sequence, 290 residues long: AA9 family lytic polysaccharide monooxygenase A (290 aa).

A signal peptide spans 1–17 (MKLSLLASVALVPFVSA). Positions 18 and 101 each coordinate Cu(2+). Cys-67 and Cys-189 are joined by a disulfide. An O2-binding site is contributed by His-176. Cu(2+) is bound at residue Tyr-187. Residues Asn-220 and Asn-254 are each glycosylated (N-linked (GlcNAc...) asparagine). The segment at 240–290 (GGSGSGSSSYSKVANVTSSDESSQSGASSSQGTVSTCPNKYNRRHARQFKP) is disordered. Residues 245–275 (GSSSYSKVANVTSSDESSQSGASSSQGTVST) show a composition bias toward low complexity. A compositionally biased stretch (basic residues) spans 280-290 (YNRRHARQFKP).

This sequence belongs to the polysaccharide monooxygenase AA9 family. Cu(2+) serves as cofactor.

It is found in the secreted. It carries out the reaction [(1-&gt;4)-beta-D-glucosyl]n+m + reduced acceptor + O2 = 4-dehydro-beta-D-glucosyl-[(1-&gt;4)-beta-D-glucosyl]n-1 + [(1-&gt;4)-beta-D-glucosyl]m + acceptor + H2O.. In terms of biological role, lytic polysaccharide monooxygenase (LPMO) that depolymerizes crystalline and amorphous polysaccharides via the oxidation of scissile alpha- or beta-(1-4)-glycosidic bonds, yielding exclusively C1 oxidation products. Catalysis by LPMOs requires the reduction of the active-site copper from Cu(II) to Cu(I) by a reducing agent and H(2)O(2) or O(2) as a cosubstrate. The sequence is that of AA9 family lytic polysaccharide monooxygenase A from Aspergillus fumigatus (strain ATCC MYA-4609 / CBS 101355 / FGSC A1100 / Af293) (Neosartorya fumigata).